Reading from the N-terminus, the 87-residue chain is Putative BTB/POZ domain-containing protein At3g29740 (87 aa).

The BTB domain maps to Val24–Glu87.

The protein operates within protein modification; protein ubiquitination. Functionally, may act as a substrate-specific adapter of an E3 ubiquitin-protein ligase complex (CUL3-RBX1-BTB) which mediates the ubiquitination and subsequent proteasomal degradation of target proteins. The chain is Putative BTB/POZ domain-containing protein At3g29740 from Arabidopsis thaliana (Mouse-ear cress).